The following is a 107-amino-acid chain: uncharacterized protein (107 aa).

The next 3 membrane-spanning stretches (helical) occupy residues 16–36, 47–67, and 85–105; these read VIPCTLSSPSFVLMAVISESL, IISLIESAVTSLSYVTWHSLV, and LIVLVQALHVIPCTASITSLI.

It is found in the membrane. This is an uncharacterized protein from Saccharomyces cerevisiae (strain ATCC 204508 / S288c) (Baker's yeast).